Reading from the N-terminus, the 375-residue chain is Anhydro-N-acetylmuramic acid kinase (375 aa).

Residue 12 to 19 (GTSMDGVD) participates in ATP binding.

It belongs to the anhydro-N-acetylmuramic acid kinase family.

The enzyme catalyses 1,6-anhydro-N-acetyl-beta-muramate + ATP + H2O = N-acetyl-D-muramate 6-phosphate + ADP + H(+). It functions in the pathway amino-sugar metabolism; 1,6-anhydro-N-acetylmuramate degradation. Its pathway is cell wall biogenesis; peptidoglycan recycling. Catalyzes the specific phosphorylation of 1,6-anhydro-N-acetylmuramic acid (anhMurNAc) with the simultaneous cleavage of the 1,6-anhydro ring, generating MurNAc-6-P. Is required for the utilization of anhMurNAc either imported from the medium or derived from its own cell wall murein, and thus plays a role in cell wall recycling. This chain is Anhydro-N-acetylmuramic acid kinase, found in Photobacterium profundum (strain SS9).